The primary structure comprises 1189 residues: Phosphatidylinositol 3,4,5-trisphosphate 5-phosphatase 1 (1189 aa).

An SH2 domain is found at 5–101 (WNHGNITRSK…GLVTHLQYPV (97 aa)). A compositionally biased stretch (acidic residues) spans 103-117 (LEEEDTGDDPEEDTV). The interval 103–132 (LEEEDTGDDPEEDTVESVVSPPELPPRNIP) is disordered. Positions 124-129 (PELPPR) match the SH3-binding 1 motif. Position 243 is a phosphoserine (serine 243). The tract at residues 870 to 906 (TERDESSGPKTLKSLTSHDPMKQWEVTSRAPPCSGSS) is disordered. An NPXY motif 1 motif is present at residues 912-915 (NPNY). The residue at position 915 (tyrosine 915) is a Phosphotyrosine. Residues 922-1189 (GPPMPLHVKQ…PGPLGRTAMQ (268 aa)) form a disordered region. Residues 931–943 (QTLSPDQQPTAWS) show a composition bias toward polar residues. Residue serine 934 is modified to Phosphoserine. Tyrosine 944 is modified (phosphotyrosine). Phosphoserine is present on serine 960. Positions 961–971 (PPTPPGQPPIS) are enriched in pro residues. The residue at position 963 (threonine 963) is a Phosphothreonine. An SH3-binding 2 motif is present at residues 969–974 (PISPKK). Serine 971 carries the post-translational modification Phosphoserine. Residues 1016 to 1030 (MFENPLYGSLSSFPK) are interaction with DAB2. The NPXY motif 2 motif lies at 1019 to 1022 (NPLY). Tyrosine 1022 bears the Phosphotyrosine mark. The span at 1033–1047 (PRKDQESPKMPRKEP) shows a compositional bias: basic and acidic residues. An SH3-binding 3 motif is present at residues 1040-1051 (PKMPRKEPPPCP). Residues 1134 to 1145 (PPTPTPRPPLPV) show a composition bias toward pro residues. Residues 1157–1177 (KGRDYRDNTELPHHGKHRPEE) show a composition bias toward basic and acidic residues.

This sequence belongs to the inositol 1,4,5-trisphosphate 5-phosphatase family. Interacts with tyrosine phosphorylated form of SHC1. Interacts with tyrosine phosphorylated form of DOK1. Interacts with tyrosine phosphorylated form of DOK3. Interacts with tyrosine phosphorylated form of SLAMF1/CD150. Interacts with PTPN11 in response to IL-3. Interacts with receptor EPOR. Interacts with receptors MS4A2/FCER1B and FCER1G. Interacts with receptors FCGR2B and FCGR3. Interacts with receptor FCGR2A, leading to regulate gene expression during the phagocytic process. Interacts with GRB2. Interacts with PLCG1. Interacts with tyrosine kinases SRC and TEC. Interacts with c-Met/MET. Interacts with MILR1 (tyrosine-phosphorylated). Can weakly interact (via NPXY motif 2) with DAB2 (via PID domain); the interaction is impaired by tyrosine phosphorylation of the NPXY motif. Interacts with FCRL3 and FCRL6 (tyrosine phosphorylated form). Interacts (via SH2 domain) with tyrosine phosphorylated KLRC1 (via ITIM). Interacts with MPL/TPOR. In terms of processing, tyrosine phosphorylated by the members of the SRC family after exposure to a diverse array of extracellular stimuli such as cytokines, growth factors, antibodies, chemokines, integrin ligands and hypertonic and oxidative stress. Phosphorylated upon IgG receptor FCGR2B-binding. Specifically expressed in immune and hematopoietic cells. Expressed in bone marrow and blood cells. Levels vary considerably within this compartment. Present in at least 74% of immature CD34+ cells, whereas within the more mature population of CD33+ cells, it is present in only 10% of cells. Present in the majority of T-cells, while it is present in a minority of B-cells (at protein level).

The protein resides in the cytoplasm. It is found in the cell membrane. Its subcellular location is the membrane raft. The protein localises to the cytoskeleton. It localises to the membrane. It carries out the reaction a 1,2-diacyl-sn-glycero-3-phospho-(1D-myo-inositol-3,4,5-trisphosphate) + H2O = a 1,2-diacyl-sn-glycero-3-phospho-(1D-myo-inositol-3,4-bisphosphate) + phosphate. The catalysed reaction is 1D-myo-inositol 1,3,4,5-tetrakisphosphate + H2O = 1D-myo-inositol 1,3,4-trisphosphate + phosphate. It catalyses the reaction a 1,2-diacyl-sn-glycero-3-phospho-(1D-myo-inositol-4,5-bisphosphate) + H2O = a 1,2-diacyl-sn-glycero-3-phospho-(1D-myo-inositol 4-phosphate) + phosphate. Its activity is regulated as follows. Activated upon translocation to the sites of synthesis of PtdIns(3,4,5)P3 in the membrane. Phosphatidylinositol (PtdIns) phosphatase that specifically hydrolyzes the 5-phosphate of phosphatidylinositol-3,4,5-trisphosphate (PtdIns(3,4,5)P3) to produce PtdIns(3,4)P2, thereby negatively regulating the PI3K (phosphoinositide 3-kinase) pathways. Able also to hydrolyzes the 5-phosphate of phosphatidylinositol-4,5-bisphosphate (PtdIns(4,5)P3) and inositol 1,3,4,5-tetrakisphosphate. Acts as a negative regulator of B-cell antigen receptor signaling. Mediates signaling from the FC-gamma-RIIB receptor (FCGR2B), playing a central role in terminating signal transduction from activating immune/hematopoietic cell receptor systems. Acts as a negative regulator of myeloid cell proliferation/survival and chemotaxis, mast cell degranulation, immune cells homeostasis, integrin alpha-IIb/beta-3 signaling in platelets and JNK signaling in B-cells. Regulates proliferation of osteoclast precursors, macrophage programming, phagocytosis and activation and is required for endotoxin tolerance. Involved in the control of cell-cell junctions, CD32a signaling in neutrophils and modulation of EGF-induced phospholipase C activity. Key regulator of neutrophil migration, by governing the formation of the leading edge and polarization required for chemotaxis. Modulates FCGR3/CD16-mediated cytotoxicity in NK cells. Mediates the activin/TGF-beta-induced apoptosis through its Smad-dependent expression. This is Phosphatidylinositol 3,4,5-trisphosphate 5-phosphatase 1 (INPP5D) from Homo sapiens (Human).